A 79-amino-acid polypeptide reads, in one-letter code: Cytoinsectotoxin-3 (79 aa).

This sequence belongs to the cationic peptide 06 (cytoinsectotoxin) family. In terms of tissue distribution, expressed by the venom gland.

The protein resides in the secreted. Its function is as follows. Insecticidal and antimicrobial peptide. Has insecticidal activity against larvae of flesh fly S.carnaria. Has antibacterial activity against Gram-positive bacterium B.subtilis B-501 (MIC=0.63 uM) and Gram-negative bacterium E.coli DH5alpha (MIC=2.5 uM). The polypeptide is Cytoinsectotoxin-3 (Lachesana tarabaevi (Spider)).